We begin with the raw amino-acid sequence, 85 residues long: Protein AC4 (85 aa).

Residue Gly-2 is the site of N-myristoyl glycine; by host attachment. The segment at 44–63 (RAPMSNPTSRKTGTVSNGDC) is disordered. Residues 46 to 62 (PMSNPTSRKTGTVSNGD) show a composition bias toward polar residues.

The protein belongs to the geminiviridae protein AC4/C4 family.

The protein localises to the host cell membrane. In terms of biological role, pathogenicity determinant. May act as a suppressor of RNA-mediated gene silencing, also known as post-transcriptional gene silencing (PTGS), a mechanism of plant viral defense that limits the accumulation of viral RNAs. The sequence is that of Protein AC4 from Potato yellow mosaic virus (isolate Venezuela) (PYMV).